The chain runs to 79 residues: uncharacterized protein (79 aa).

Positions 1–18 are cleaved as a signal peptide; sequence MQIKNIVAVLATVTAINA. The segment at 24 to 44 is disordered; the sequence is PNATTPNATQPNATQPNTTLP. 4 N-linked (GlcNAc...) asparagine glycosylation sites follow: Asn25, Asn30, Asn35, and Asn40. The GPI-anchor amidated glycine moiety is linked to residue Gly55. Positions 56–79 are cleaved as a propeptide — removed in mature form; the sequence is EAVVNTMAAGAFGAAIAAGVAFLF.

It localises to the cell membrane. This is an uncharacterized protein from Saccharomyces cerevisiae (strain ATCC 204508 / S288c) (Baker's yeast).